The following is a 210-amino-acid chain: Proteasome subunit beta (210 aa).

A propeptide spans 1–9 (removed in mature form; by autocatalysis); that stretch reads MDNDKYLKG. The active-site Nucleophile is Thr-10.

The protein belongs to the peptidase T1B family. The 20S proteasome core is composed of 14 alpha and 14 beta subunits that assemble into four stacked heptameric rings, resulting in a barrel-shaped structure. The two inner rings, each composed of seven catalytic beta subunits, are sandwiched by two outer rings, each composed of seven alpha subunits. The catalytic chamber with the active sites is on the inside of the barrel. Has a gated structure, the ends of the cylinder being occluded by the N-termini of the alpha-subunits. Is capped at one or both ends by the proteasome regulatory ATPase, PAN.

Its subcellular location is the cytoplasm. It carries out the reaction Cleavage of peptide bonds with very broad specificity.. The formation of the proteasomal ATPase PAN-20S proteasome complex, via the docking of the C-termini of PAN into the intersubunit pockets in the alpha-rings, triggers opening of the gate for substrate entry. Interconversion between the open-gate and close-gate conformations leads to a dynamic regulation of the 20S proteasome proteolysis activity. Component of the proteasome core, a large protease complex with broad specificity involved in protein degradation. In Methanosarcina thermophila, this protein is Proteasome subunit beta.